Here is a 172-residue protein sequence, read N- to C-terminus: 3-phenylpropionate/cinnamic acid dioxygenase subunit beta (172 aa).

Belongs to the bacterial ring-hydroxylating dioxygenase beta subunit family. In terms of assembly, this dioxygenase system consists of four proteins: the two subunits of the hydroxylase component (HcaE and HcaF), a ferredoxin (HcaC) and a ferredoxin reductase (HcaD).

It carries out the reaction 3-phenylpropanoate + NADH + O2 + H(+) = 3-(cis-5,6-dihydroxycyclohexa-1,3-dien-1-yl)propanoate + NAD(+). The catalysed reaction is (E)-cinnamate + NADH + O2 + H(+) = (2E)-3-(cis-5,6-dihydroxycyclohexa-1,3-dien-1-yl)prop-2-enoate + NAD(+). It functions in the pathway aromatic compound metabolism; 3-phenylpropanoate degradation. In terms of biological role, part of the multicomponent 3-phenylpropionate dioxygenase. Converts 3-phenylpropionic acid (PP) and cinnamic acid (CI) into 3-phenylpropionate-dihydrodiol (PP-dihydrodiol) and cinnamic acid-dihydrodiol (CI-dihydrodiol), respectively. The protein is 3-phenylpropionate/cinnamic acid dioxygenase subunit beta of Shigella sonnei (strain Ss046).